We begin with the raw amino-acid sequence, 348 residues long: Protein RecA (348 aa).

Residue 64-71 (GPESSGKT) participates in ATP binding. The span at 324-335 (EYEIDGSNKEPL) shows a compositional bias: basic and acidic residues. A disordered region spans residues 324–348 (EYEIDGSNKEPLAETEETLSLLDDE). A compositionally biased stretch (acidic residues) spans 336-348 (AETEETLSLLDDE).

The protein belongs to the RecA family.

The protein localises to the cytoplasm. Can catalyze the hydrolysis of ATP in the presence of single-stranded DNA, the ATP-dependent uptake of single-stranded DNA by duplex DNA, and the ATP-dependent hybridization of homologous single-stranded DNAs. It interacts with LexA causing its activation and leading to its autocatalytic cleavage. The chain is Protein RecA from Listeria ivanovii.